Consider the following 406-residue polypeptide: MKKDVKKVVLAYSGGLDTSIILKWLQDEYKCEVVTFTADIGQGEELEPARKKALALGVKPENIFIEDLREEFVRDYVFPMFRANAIYEGEYLLGTSIARPLIAKRQAEIAKLTGADGVSHGATGKGNDQVRFELAYYAINPNLKVIVPWREWDLNSREKLLAYAEKNGIDITRKPGKSPYSMDANLLHISYEGLVLEDPNHAPENDMWRWCVSPKDAPNESEIITIGYEKGDPVSINGKKMSPAEILTELNHLGAKHGIGRLDLVENRYVGMKSRGCYETPGGTIMLKAHRAIESITLDRGSAHLKDELMPRYAELIYNGFWFSPERLMLQAAIDKSQEHVNGEVRVELYKGNVTILGRSSKDDNLFSEAYCTFEEDSVYNPKDADGFIKLNALRFIIASKNGRKF.

Residues 11 to 19 and A38 contribute to the ATP site; that span reads AYSGGLDTS. Y91 and S96 together coordinate L-citrulline. G121 is an ATP binding site. Residues T123, N127, and D128 each contribute to the L-aspartate site. N127 is a binding site for L-citrulline. 5 residues coordinate L-citrulline: R131, S181, S190, E266, and Y278.

It belongs to the argininosuccinate synthase family. Type 1 subfamily. As to quaternary structure, homotetramer.

It localises to the cytoplasm. The catalysed reaction is L-citrulline + L-aspartate + ATP = 2-(N(omega)-L-arginino)succinate + AMP + diphosphate + H(+). Its pathway is amino-acid biosynthesis; L-arginine biosynthesis; L-arginine from L-ornithine and carbamoyl phosphate: step 2/3. In Campylobacter curvus (strain 525.92), this protein is Argininosuccinate synthase.